Consider the following 135-residue polypeptide: Ribonuclease P protein component 2 (135 aa).

It belongs to the eukaryotic/archaeal RNase P protein component 2 family. Consists of a catalytic RNA component and at least 4-5 protein subunits.

It is found in the cytoplasm. The catalysed reaction is Endonucleolytic cleavage of RNA, removing 5'-extranucleotides from tRNA precursor.. Part of ribonuclease P, a protein complex that generates mature tRNA molecules by cleaving their 5'-ends. This is Ribonuclease P protein component 2 from Methanosarcina barkeri (strain Fusaro / DSM 804).